A 275-amino-acid chain; its full sequence is Calcium uniporter protein, mitochondrial (275 aa).

Residues 1 to 28 (MNSFVIRNGFGLVRTFNTRLFTTSTQNL) constitute a mitochondrion transit peptide. The Mitochondrial matrix segment spans residues 29–165 (EGELKTILGQ…DRKAHRRATA (137 aa)). A coiled-coil region spans residues 125 to 157 (VGLNKLIESKKSEINSLRQKIQPLEEKKQVIDR). The chain crosses the membrane as a helical span at residues 166–186 (IIWTGLGYCFAQAAILARLTW). At 187–192 (WDLSWD) the chain is on the mitochondrial intermembrane side. The Selectivity filter motif lies at 191–199 (WDIIEPVSY). Residues 193 to 213 (IIEPVSYFLTFGSVLIGYTYF) traverse the membrane as a helical segment. E195 serves as a coordination point for Ca(2+). Over 214–275 (TMTKTEFTYE…ELATKYDHTH (62 aa)) the chain is Mitochondrial matrix. Residues 244-270 (PKEDYENLVQAIDKKEKELKELELATK) adopt a coiled-coil conformation.

The protein belongs to the MCU (TC 1.A.77) family. In terms of assembly, homooligomer.

Its subcellular location is the mitochondrion inner membrane. The enzyme catalyses Ca(2+)(in) = Ca(2+)(out). Inhibited by ruthenium red or its derivative Ru360. In terms of biological role, mitochondrial inner membrane calcium uniporter that mediates calcium uptake into mitochondria. Constitutes a pore-forming and calcium-conducting subunit. Mitochondrial calcium homeostasis plays key roles in cellular physiology and regulates cell bioenergetics, cytoplasmic calcium signals and activation of cell death pathways. Sufficient to operate as a pore-forming channel without the need of calcium-sensor or auxiliary subunit. This is Calcium uniporter protein, mitochondrial from Dictyostelium discoideum (Social amoeba).